The following is a 312-amino-acid chain: tRNA dimethylallyltransferase (312 aa).

Residue 11–18 (GATATGKT) participates in ATP binding. 13–18 (TATGKT) is a binding site for substrate. The interval 36–39 (DSRQ) is interaction with substrate tRNA.

It belongs to the IPP transferase family. In terms of assembly, monomer. The cofactor is Mg(2+).

It catalyses the reaction adenosine(37) in tRNA + dimethylallyl diphosphate = N(6)-dimethylallyladenosine(37) in tRNA + diphosphate. In terms of biological role, catalyzes the transfer of a dimethylallyl group onto the adenine at position 37 in tRNAs that read codons beginning with uridine, leading to the formation of N6-(dimethylallyl)adenosine (i(6)A). This is tRNA dimethylallyltransferase from Thermosynechococcus vestitus (strain NIES-2133 / IAM M-273 / BP-1).